The primary structure comprises 1471 residues: Myosin-51 (1471 aa).

One can recognise a Myosin N-terminal SH3-like domain in the interval 7–61 (SVGSECWVSNNNGHWDAARLIEIKDNGGGKVVATVAKSSGVLETVNYQQLQNRNI). Residues 65-749 (ESPSDLTNLP…VIGNFEEAHR (685 aa)) enclose the Myosin motor domain. 159–166 (GESGAGKT) lines the ATP pocket. The actin-binding stretch occupies residues 628 to 650 (LSQLMTTVSSTNVHYIRCIKPNE). 6 consecutive IQ domains span residues 753–773 (SKST…KEYQ), 776–796 (VKFI…QRFE), 801–821 (ERAA…KRYL), 824–844 (IKCA…SRYI), 849–869 (ESSA…KTFR), and 872–892 (KKSV…RYLR). Residues 909–952 (KNLQASITEVSKQLKSNSKKVTVLRNKLNILNNSLSKWKCLIKK) are a coiled coil. Residues 1171–1417 (EKPLQAVLYW…SKAVEALSCK (247 aa)) form the Dilute domain.

Belongs to the TRAFAC class myosin-kinesin ATPase superfamily. Myosin family.

Its subcellular location is the cytoplasm. Its function is as follows. Involved in cytokinesis. In Schizosaccharomyces pombe (strain 972 / ATCC 24843) (Fission yeast), this protein is Myosin-51 (myo51).